A 795-amino-acid chain; its full sequence is MKFSEKWLREWIDPQVSSKILHEQISNSGIEVEHVENFKSEFHGVVVGKIVQCTFHNESNNLKVLKVDIGKKKLLNIICGASNCRNGIKVAVATVGATLPKNITINKKILKGAWSEGMLCSFFELGLFLNDNKIIEFPKETLVGINVYDYFLLEDNIIKVSITSNRPDGLSILGLSRNIAAINDLRISPLKNRLVPAVIQKKINIDIQADKECMNFFGRIIENININVDTPFWMKKKLFFSNVLSENIITNIIHYVLIELGQPLNILDADNINDSIIVRMARHEEDLFLKNNIKISLNENILVFSDSNKILSLPGNINSNIVDVDKNTKNIFLSSYLINRKYISYIIKKMNMNTVLEYHYYGVDPFLQNYAIEYATDLILKICGGVPGPINEKKCNFQIHKNNTIRLHHERLNKIIGFFIDTSVISKILYRLDYQLKFQKTFWDVISPSWRFDILIEEDVIGDILRIYEYNNVHLIPLKEFLNCSKKNELTDSLLKKSAVILINQGYHEVINYGFIDPKIQNLIFPNEENLLLSNPISQDMSCMRLSLWPGLLKNISYNKNRQQKSIRIFESGLCFSIDKRENLGIRQEIFLAAAISGNYIKENWYYNIRKMDFYDLKGDLESILESICQLNEIEFRRKKIHGLHPEQSASIYFRNYLIGSIGAIDPRLEKALNVSSTTFLFEISLNNFSDIKPLKVEEISKFPTVRRDIAILISEEIAAYNVIEQCKIFFINEKVEINLFDIYAYKESHNHKKSLGISFIFQNKKRTFQDNEINLMIDDCIGVLQKKFQAVLRK.

The 110-residue stretch at 39 to 148 (KSEFHGVVVG…KETLVGINVY (110 aa)) folds into the tRNA-binding domain. Positions 400-475 (HKNNTIRLHH…RIYEYNNVHL (76 aa)) constitute a B5 domain. Asp-453, Asp-459, and Asp-463 together coordinate Mg(2+). Residues 701–794 (SKFPTVRRDI…LQKKFQAVLR (94 aa)) enclose the FDX-ACB domain.

Belongs to the phenylalanyl-tRNA synthetase beta subunit family. Type 1 subfamily. As to quaternary structure, tetramer of two alpha and two beta subunits. It depends on Mg(2+) as a cofactor.

Its subcellular location is the cytoplasm. It carries out the reaction tRNA(Phe) + L-phenylalanine + ATP = L-phenylalanyl-tRNA(Phe) + AMP + diphosphate + H(+). The polypeptide is Phenylalanine--tRNA ligase beta subunit (pheT) (Buchnera aphidicola subsp. Acyrthosiphon pisum (strain APS) (Acyrthosiphon pisum symbiotic bacterium)).